Reading from the N-terminus, the 309-residue chain is Serine/threonine-protein phosphatase PP2A catalytic subunit (309 aa).

The Mn(2+) site is built by Asp-57, His-59, Asp-85, and Asn-117. His-118 (proton donor) is an active-site residue. Residues His-167 and His-241 each coordinate Mn(2+).

The protein belongs to the PPP phosphatase family. PP-2A subfamily. Mn(2+) is required as a cofactor.

The catalysed reaction is O-phospho-L-seryl-[protein] + H2O = L-seryl-[protein] + phosphate. The enzyme catalyses O-phospho-L-threonyl-[protein] + H2O = L-threonyl-[protein] + phosphate. In Brassica napus (Rape), this protein is Serine/threonine-protein phosphatase PP2A catalytic subunit.